A 292-amino-acid polypeptide reads, in one-letter code: Ribosomal RNA small subunit methyltransferase A (292 aa).

S-adenosyl-L-methionine-binding residues include asparagine 46, leucine 48, glycine 73, glutamate 94, aspartate 118, and asparagine 136.

It belongs to the class I-like SAM-binding methyltransferase superfamily. rRNA adenine N(6)-methyltransferase family. RsmA subfamily.

It is found in the cytoplasm. It carries out the reaction adenosine(1518)/adenosine(1519) in 16S rRNA + 4 S-adenosyl-L-methionine = N(6)-dimethyladenosine(1518)/N(6)-dimethyladenosine(1519) in 16S rRNA + 4 S-adenosyl-L-homocysteine + 4 H(+). Its function is as follows. Specifically dimethylates two adjacent adenosines (A1518 and A1519) in the loop of a conserved hairpin near the 3'-end of 16S rRNA in the 30S particle. May play a critical role in biogenesis of 30S subunits. This Deinococcus radiodurans (strain ATCC 13939 / DSM 20539 / JCM 16871 / CCUG 27074 / LMG 4051 / NBRC 15346 / NCIMB 9279 / VKM B-1422 / R1) protein is Ribosomal RNA small subunit methyltransferase A.